The following is a 288-amino-acid chain: Fibroblast growth factor 2 (288 aa).

The propeptide occupies 1-142 (MVGVGGGDVE…TMAAGSITTL (142 aa)). A disordered region spans residues 1–156 (MVGVGGGDVE…EDGGSGAFPP (156 aa)). Positions 72 to 84 (ERPSGSRLGDHGR) are enriched in basic and acidic residues. Omega-N-methylarginine; alternate occurs at positions 108, 110, and 112. Symmetric dimethylarginine; alternate is present on residues R108, R110, and R112. Over residues 113–132 (GTAAPRAAPAARGSRPGPAG) the composition is skewed to low complexity. Residue N169 coordinates heparin. Residues 179 to 181 (DGR) carry the Cell attachment site; atypical motif. Residue Y215 is modified to Phosphotyrosine; by TEC. A Cell attachment site; atypical motif is present at residues 221 to 223 (DGR). K228 participates in a covalent cross-link: Glycyl lysine isopeptide (Lys-Gly) (interchain with G-Cter in SUMO1). Residues 261 to 277 (KRTGQYKLGSKTGPGQK) form a heparin-binding region.

This sequence belongs to the heparin-binding growth factors family. Monomer. Homodimer. Interacts with FGFR1, FGFR2, FGFR3 and FGFR4. Affinity between fibroblast growth factors (FGFs) and their receptors is increased by heparan sulfate glycosaminoglycans that function as coreceptors. Interacts with CSPG4, FGFBP1 and TEC. Found in a complex with FGFBP1, FGF1 and FGF2. Interacts with FGFBP3. Interacts with integrin ITGAV:ITGB3; the interaction is required for FGF2 signaling. Interacts with SNORC (via the extracellular domain). Interacts with glypican GPC3. Post-translationally, phosphorylation at Tyr-215 regulates FGF2 unconventional secretion.

The protein resides in the secreted. It localises to the nucleus. Acts as a ligand for FGFR1, FGFR2, FGFR3 and FGFR4. Also acts as an integrin ligand which is required for FGF2 signaling. Binds to integrin ITGAV:ITGB3. Plays an important role in the regulation of cell survival, cell division, cell differentiation and cell migration. Functions as a potent mitogen in vitro. Can induce angiogenesis. Mediates phosphorylation of ERK1/2 and thereby promotes retinal lens fiber differentiation. This chain is Fibroblast growth factor 2, found in Pan troglodytes (Chimpanzee).